A 66-amino-acid chain; its full sequence is Large ribosomal subunit protein bL35 (66 aa).

A compositionally biased stretch (basic residues) spans 1 to 44; it reads MPKLKSHRGAAKRFRKTASGAIKRRGAYRNHILTKKSTKQKRHL. The disordered stretch occupies residues 1–48; sequence MPKLKSHRGAAKRFRKTASGAIKRRGAYRNHILTKKSTKQKRHLRVEA.

This sequence belongs to the bacterial ribosomal protein bL35 family.

The sequence is that of Large ribosomal subunit protein bL35 from Legionella pneumophila (strain Corby).